We begin with the raw amino-acid sequence, 269 residues long: Integral membrane protein 2C (269 aa).

A Phosphothreonine modification is found at threonine 39. Residues 57 to 77 (VGGVCYLSMGMVVLLMGLVFA) form a helical; Signal-anchor for type II membrane protein membrane-spanning segment. Residues 138–232 (FGGGDPADII…LCNGKDTYRL (95 aa)) form the BRICHOS domain. The cysteines at positions 165 and 224 are disulfide-linked. An N-linked (GlcNAc...) asparagine glycan is attached at asparagine 171.

Belongs to the ITM2 family. Interacts with BACE1. Interacts with APP. Interacts with STMN2. In terms of processing, type I membrane-bound, as well as soluble, furin has a pre-eminent role in ITM2C proteolytic processing. PCSK7 and PCSK5 may also be involved although to a lesser extent. The soluble form of PCSK7 is incapable of processing ITM2C. Fails to undergo shedding by ADAM10 and intramembrane cleavage by SPPL2B.

It localises to the lysosome membrane. It is found in the cell membrane. Negative regulator of amyloid-beta peptide production. May inhibit the processing of APP by blocking its access to alpha- and beta-secretase. Binding to the beta-secretase-cleaved APP C-terminal fragment is negligible, suggesting that ITM2C is a poor gamma-secretase cleavage inhibitor. May play a role in TNF-induced cell death and neuronal differentiation. The polypeptide is Integral membrane protein 2C (Itm2c) (Rattus norvegicus (Rat)).